The sequence spans 350 residues: Renin receptor (350 aa).

The first 16 residues, 1-16 (MAVFVVLLALVAGVLG), serve as a signal peptide directing secretion. Topologically, residues 17 to 302 (NEFSILKSPG…YNLAYKYNFE (286 aa)) are extracellular. Residues 303 to 323 (YSVVFNMVLWIMIALALAVII) traverse the membrane as a helical segment. At 324-350 (TSYNIWNMDPGYDSIIYRMTNQKIRMD) the chain is on the cytoplasmic side. The Mediates retrograde transport to the ER signature appears at 346-350 (KIRMD).

Interacts with renin. Accessory component of the multisubunit proton-transporting vacuolar (V)-ATPase protein pump. Interacts (via N-terminus) with ATP6AP1 (via N-terminus). Interacts with ATP6V0D1; ATP6V0D1 is a V-ATPase complex subunit and the interaction promotes V-ATPase complex assembly. Interacts with TMEM9; TMEM9 is a V-ATPase assembly regulator and the interaction induces the interaction with ATP6V0D1. Interacts with VMA21 (via N-terminus); VMA21 is a V-ATPase accessory component. Post-translationally, phosphorylated. In terms of processing, proteolytically cleaved by a furin-like convertase in the trans-Golgi network to generate N- and C-terminal fragments. As to expression, expressed in brain, heart, placenta, liver, kidney and pancreas. Barely detectable in lung and skeletal muscles. In the kidney cortex it is restricted to the mesangium of glomeruli. In the coronary and kidney artery it is expressed in the subendothelium, associated to smooth muscles where it colocalizes with REN. Expressed in vascular structures and by syncytiotrophoblast cells in the mature fetal placenta.

Its subcellular location is the endoplasmic reticulum membrane. The protein resides in the lysosome membrane. It is found in the cytoplasmic vesicle. It localises to the autophagosome membrane. The protein localises to the cell projection. Its subcellular location is the dendritic spine membrane. The protein resides in the axon. It is found in the endosome membrane. It localises to the clathrin-coated vesicle membrane. The protein localises to the secretory vesicle. Its subcellular location is the synaptic vesicle membrane. Functionally, multifunctional protein which functions as a renin, prorenin cellular receptor and is involved in the assembly of the lysosomal proton-transporting V-type ATPase (V-ATPase) and the acidification of the endo-lysosomal system. May mediate renin-dependent cellular responses by activating ERK1 and ERK2. By increasing the catalytic efficiency of renin in AGT/angiotensinogen conversion to angiotensin I, may also play a role in the renin-angiotensin system (RAS). Through its function in V-type ATPase (v-ATPase) assembly and acidification of the lysosome it regulates protein degradation and may control different signaling pathways important for proper brain development, synapse morphology and synaptic transmission. This Homo sapiens (Human) protein is Renin receptor.